The following is a 131-amino-acid chain: MSEIPAELYYTDEHEWVLRTGDDTLRVGITDYAQAALGDVVFVQLPDVGAELTSGESFGEVESTKSVSDLYAPVSAKVLAVNGNLEASPDLVNSDPYGEGWLVDLQLDADDMEAALGGLLDADGYRGVVTE.

The 83-residue stretch at 24–106 (TLRVGITDYA…YGEGWLVDLQ (83 aa)) folds into the Lipoyl-binding domain. The residue at position 65 (Lys65) is an N6-lipoyllysine.

This sequence belongs to the GcvH family. In terms of assembly, the glycine cleavage system is composed of four proteins: P, T, L and H. (R)-lipoate serves as cofactor.

In terms of biological role, the glycine cleavage system catalyzes the degradation of glycine. The H protein shuttles the methylamine group of glycine from the P protein to the T protein. The protein is Glycine cleavage system H protein of Mycobacterium sp. (strain JLS).